The following is a 41-amino-acid chain: Large ribosomal subunit protein bL36 (41 aa).

The protein belongs to the bacterial ribosomal protein bL36 family.

The protein is Large ribosomal subunit protein bL36 of Rickettsia massiliae (strain Mtu5).